The following is a 259-amino-acid chain: ATP synthase subunit a (259 aa).

A propeptide spans 1 to 7 (MTNNYIN) (removed in mature form). Transmembrane regions (helical) follow at residues 36-56 (FSLY…LSIG), 95-115 (YVPL…IGMV), 125-145 (LIYI…LGLF), 164-206 (LVPV…NLVK), and 211-253 (INYF…SYLK).

F-type ATP synthases have 2 components, the catalytic core F(1) and the membrane-embedded component F(0), linked together by a central stalk and a peripheral stalk. The central stalk, also called rotor shaft, is often seen as part of F(1). The peripheral stalk is seen as part of F(0). F(0) contains the membrane channel next to the rotor. F-type ATP synthases form dimers but each monomer functions independently in ATP generation. The dimer consists of 18 different polypeptides: ATP1 (subunit alpha, part of F(1), 3 molecules per monomer), ATP2 (subunit beta, part of F(1), 3 molecules per monomer), ATP3 (subunit gamma, part of the central stalk), ATP4 (subunit b, part of the peripheral stalk), ATP5/OSCP (subunit 5/OSCP, part of the peripheral stalk), ATP6 (subunit a, part of the peripheral stalk), ATP7 (subunit d, part of the peripheral stalk), ATP8 (subunit 8, part of the peripheral stalk), OLI1 (subunit c, part of the rotor, 10 molecules per monomer), ATP14 (subunit h, part of the peripheral stalk), ATP15 (subunit epsilon, part of the central stalk), ATP16 (subunit delta, part of the central stalk), ATP17 (subunit f, part of the peripheral stalk), ATP18 (subunit i/j, part of the peripheral stalk). Dimer-specific subunits are ATP19 (subunit k, at interface between monomers), ATP20 (subunit g, at interface between monomers), TIM11 (subunit e, at interface between monomers). Also contains subunit L.

The protein localises to the mitochondrion inner membrane. Mitochondrial membrane ATP synthase (F(1)F(0) ATP synthase or Complex V) produces ATP from ADP in the presence of a proton gradient across the membrane which is generated by electron transport complexes of the respiratory chain. F-type ATP synthases consist of two structural domains, F(1) - containing the extramembraneous catalytic core, and F(0) - containing the membrane proton channel, linked together by a central stalk and a peripheral stalk. During catalysis, ATP synthesis in the catalytic domain of F(1) is coupled via a rotary mechanism of the central stalk subunits to proton translocation. Key component of the proton channel; it may play a direct role in the translocation of protons across the membrane. The sequence is that of ATP synthase subunit a from Pichia angusta (Yeast).